Reading from the N-terminus, the 523-residue chain is UDP-glucuronosyltransferase 3A2 (523 aa).

Positions 1–22 (MAAHRRWLLMSFLFLEVILLEA) are cleaved as a signal peptide. Residues 23–487 (AKILTISTLS…QPWHEQYMLD (465 aa)) lie on the Extracellular side of the membrane. Asn-52 is a glycosylation site (N-linked (GlcNAc...) asparagine). A helical transmembrane segment spans residues 488–508 (VFLFLLGLMLGTLWLSVKVLV). At 509 to 523 (AVTRYLSIATKVKEA) the chain is on the cytoplasmic side.

Belongs to the UDP-glycosyltransferase family. Highly expressed in kidney, while it is expressed at low levels in liver. Not detected in other tissues examined.

Its subcellular location is the membrane. The catalysed reaction is glucuronate acceptor + UDP-alpha-D-glucuronate = acceptor beta-D-glucuronoside + UDP + H(+). In terms of biological role, UDP-glucuronosyltransferases catalyze phase II biotransformation reactions in which lipophilic substrates are conjugated with glucuronic acid to increase water solubility and enhance excretion. They are of major importance in the conjugation and subsequent elimination of potentially toxic xenobiotics and endogenous compounds. The protein is UDP-glucuronosyltransferase 3A2 (Ugt3a2) of Mus musculus (Mouse).